Reading from the N-terminus, the 289-residue chain is uncharacterized protein (289 aa).

This is an uncharacterized protein from Schizosaccharomyces pombe (strain 972 / ATCC 24843) (Fission yeast).